Here is a 161-residue protein sequence, read N- to C-terminus: Ribosome maturation factor RimP (161 aa).

It belongs to the RimP family.

The protein localises to the cytoplasm. Functionally, required for maturation of 30S ribosomal subunits. The protein is Ribosome maturation factor RimP of Desulfosudis oleivorans (strain DSM 6200 / JCM 39069 / Hxd3) (Desulfococcus oleovorans).